A 379-amino-acid polypeptide reads, in one-letter code: Dual-specificity RNA methyltransferase RlmN (379 aa).

The active-site Proton acceptor is E95. The 245-residue stretch at 101–345 folds into the Radical SAM core domain; that stretch reads EETRGTLCVS…TTVRKTRGDD (245 aa). C108 and C350 are oxidised to a cystine. The [4Fe-4S] cluster site is built by C115, C119, and C122. S-adenosyl-L-methionine-binding positions include 176–177, S208, 230–232, and N307; these read GE and SLH. The S-methylcysteine intermediate role is filled by C350.

The protein belongs to the radical SAM superfamily. RlmN family. Requires [4Fe-4S] cluster as cofactor.

It localises to the cytoplasm. It catalyses the reaction adenosine(2503) in 23S rRNA + 2 reduced [2Fe-2S]-[ferredoxin] + 2 S-adenosyl-L-methionine = 2-methyladenosine(2503) in 23S rRNA + 5'-deoxyadenosine + L-methionine + 2 oxidized [2Fe-2S]-[ferredoxin] + S-adenosyl-L-homocysteine. The enzyme catalyses adenosine(37) in tRNA + 2 reduced [2Fe-2S]-[ferredoxin] + 2 S-adenosyl-L-methionine = 2-methyladenosine(37) in tRNA + 5'-deoxyadenosine + L-methionine + 2 oxidized [2Fe-2S]-[ferredoxin] + S-adenosyl-L-homocysteine. Functionally, specifically methylates position 2 of adenine 2503 in 23S rRNA and position 2 of adenine 37 in tRNAs. m2A2503 modification seems to play a crucial role in the proofreading step occurring at the peptidyl transferase center and thus would serve to optimize ribosomal fidelity. This Burkholderia lata (strain ATCC 17760 / DSM 23089 / LMG 22485 / NCIMB 9086 / R18194 / 383) protein is Dual-specificity RNA methyltransferase RlmN.